Consider the following 335-residue polypeptide: UPF0353 protein Mflv_3659 (335 aa).

2 consecutive transmembrane segments (helical) span residues 18–38 (WFFL…VVQL) and 67–87 (LPAV…AGPT). Residues 98-294 (VVMLVIDVSQ…EQLKQVFTNL (197 aa)) enclose the VWFA domain. A helical transmembrane segment spans residues 309–329 (VGWLRLGAGVLALAALGALLI).

Belongs to the UPF0353 family.

The protein localises to the cell membrane. In Mycolicibacterium gilvum (strain PYR-GCK) (Mycobacterium gilvum (strain PYR-GCK)), this protein is UPF0353 protein Mflv_3659.